Consider the following 565-residue polypeptide: Adenine deaminase (565 aa).

The protein belongs to the metallo-dependent hydrolases superfamily. Adenine deaminase family. Requires Mn(2+) as cofactor.

The enzyme catalyses adenine + H2O + H(+) = hypoxanthine + NH4(+). The polypeptide is Adenine deaminase (Sinorhizobium fredii (strain NBRC 101917 / NGR234)).